A 137-amino-acid chain; its full sequence is Large ribosomal subunit protein uL16 (137 aa).

This sequence belongs to the universal ribosomal protein uL16 family. In terms of assembly, part of the 50S ribosomal subunit.

In terms of biological role, binds 23S rRNA and is also seen to make contacts with the A and possibly P site tRNAs. This is Large ribosomal subunit protein uL16 from Lactococcus lactis subsp. cremoris (strain SK11).